We begin with the raw amino-acid sequence, 864 residues long: Translation initiation factor IF-2 (864 aa).

Basic and acidic residues predominate over residues 140–171 (DSRSLNTKKENKLKISNKDEQNKKFNQHRESN). Positions 140–179 (DSRSLNTKKENKLKISNKDEQNKKFNQHRESNSFDLNHKK) are disordered. In terms of domain architecture, tr-type G spans 364-533 (IRAPVVTIMG…LLQAEMLELK (170 aa)). A G1 region spans residues 373-380 (GHVDHGKT). 373–380 (GHVDHGKT) is a binding site for GTP. Residues 398–402 (GITQN) form a G2 region. The G3 stretch occupies residues 419-422 (DTPG). GTP-binding positions include 419–423 (DTPGH) and 473–476 (NKID). A G4 region spans residues 473-476 (NKID). Residues 509-511 (SAK) form a G5 region.

This sequence belongs to the TRAFAC class translation factor GTPase superfamily. Classic translation factor GTPase family. IF-2 subfamily.

The protein resides in the cytoplasm. In terms of biological role, one of the essential components for the initiation of protein synthesis. Protects formylmethionyl-tRNA from spontaneous hydrolysis and promotes its binding to the 30S ribosomal subunits. Also involved in the hydrolysis of GTP during the formation of the 70S ribosomal complex. The sequence is that of Translation initiation factor IF-2 from Buchnera aphidicola subsp. Acyrthosiphon pisum (strain 5A).